A 48-amino-acid chain; its full sequence is Large ribosomal subunit protein eL40 (48 aa).

The protein belongs to the eukaryotic ribosomal protein eL40 family.

This chain is Large ribosomal subunit protein eL40, found in Methanosphaera stadtmanae (strain ATCC 43021 / DSM 3091 / JCM 11832 / MCB-3).